Consider the following 179-residue polypeptide: ATP synthase subunit delta (179 aa).

Belongs to the ATPase delta chain family. As to quaternary structure, F-type ATPases have 2 components, F(1) - the catalytic core - and F(0) - the membrane proton channel. F(1) has five subunits: alpha(3), beta(3), gamma(1), delta(1), epsilon(1). F(0) has three main subunits: a(1), b(2) and c(10-14). The alpha and beta chains form an alternating ring which encloses part of the gamma chain. F(1) is attached to F(0) by a central stalk formed by the gamma and epsilon chains, while a peripheral stalk is formed by the delta and b chains.

It localises to the cell inner membrane. In terms of biological role, f(1)F(0) ATP synthase produces ATP from ADP in the presence of a proton or sodium gradient. F-type ATPases consist of two structural domains, F(1) containing the extramembraneous catalytic core and F(0) containing the membrane proton channel, linked together by a central stalk and a peripheral stalk. During catalysis, ATP synthesis in the catalytic domain of F(1) is coupled via a rotary mechanism of the central stalk subunits to proton translocation. Functionally, this protein is part of the stalk that links CF(0) to CF(1). It either transmits conformational changes from CF(0) to CF(1) or is implicated in proton conduction. The sequence is that of ATP synthase subunit delta from Maricaulis maris (strain MCS10) (Caulobacter maris).